Reading from the N-terminus, the 795-residue chain is Phenylalanine--tRNA ligase beta subunit (795 aa).

The tRNA-binding domain maps to 39 to 148 (AGSFHGVVVG…ADAPIGTDIR (110 aa)). Positions 401–476 (PKRATITLRR…RVYGYNNIPD (76 aa)) constitute a B5 domain. Mg(2+) contacts are provided by aspartate 454, aspartate 460, glutamate 463, and glutamate 464. One can recognise an FDX-ACB domain in the interval 701–794 (SRFPANRRDI…LKERFQASLR (94 aa)).

It belongs to the phenylalanyl-tRNA synthetase beta subunit family. Type 1 subfamily. Tetramer of two alpha and two beta subunits. Requires Mg(2+) as cofactor.

It localises to the cytoplasm. The enzyme catalyses tRNA(Phe) + L-phenylalanine + ATP = L-phenylalanyl-tRNA(Phe) + AMP + diphosphate + H(+). This chain is Phenylalanine--tRNA ligase beta subunit, found in Escherichia coli O157:H7.